A 379-amino-acid chain; its full sequence is Trans-prenyltransferase abpB (379 aa).

Substrate contacts are provided by residues 90 to 91 (RL), R112, K197, R264, K266, Y268, and Y338.

This sequence belongs to the tryptophan dimethylallyltransferase family.

The enzyme catalyses aspulvinone E + 2 dimethylallyl diphosphate = aspulvinone H + 2 diphosphate. It catalyses the reaction butyrolactone II + dimethylallyl diphosphate = butyrolactone I + diphosphate. Its pathway is secondary metabolite biosynthesis. Trans-prenyltransferase that acts in both the aspulvinones and butyrolactones pathways. Prenylates aspulvinone E and butyrolactone II to yield repectively aspulvinone H and butyrolactone I. The chain is Trans-prenyltransferase abpB from Aspergillus terreus (strain NIH 2624 / FGSC A1156).